A 229-amino-acid polypeptide reads, in one-letter code: Cytochrome c oxidase subunit 2 (229 aa).

Topologically, residues 1–14 (MANHLQFNFQDATS) are mitochondrial intermembrane. A helical transmembrane segment spans residues 15-45 (PLMQELVKFHDHSLTILFFISALILYVLMMT). Over 46 to 59 (SLSKLTNKNILDSQ) the chain is Mitochondrial matrix. A helical membrane pass occupies residues 60–87 (EIEMVWTVIPAFILIMLALPSIQILYLM). At 88–229 (DEIASPDITI…FESWIIKLSL (142 aa)) the chain is on the mitochondrial intermembrane side. Residues His-162, Cys-197, Glu-199, Cys-201, His-205, and Met-208 each coordinate Cu cation. Glu-199 provides a ligand contact to Mg(2+).

The protein belongs to the cytochrome c oxidase subunit 2 family. Component of the cytochrome c oxidase (complex IV, CIV), a multisubunit enzyme composed of 14 subunits. The complex is composed of a catalytic core of 3 subunits MT-CO1, MT-CO2 and MT-CO3, encoded in the mitochondrial DNA, and 11 supernumerary subunits COX4I, COX5A, COX5B, COX6A, COX6B, COX6C, COX7A, COX7B, COX7C, COX8 and NDUFA4, which are encoded in the nuclear genome. The complex exists as a monomer or a dimer and forms supercomplexes (SCs) in the inner mitochondrial membrane with NADH-ubiquinone oxidoreductase (complex I, CI) and ubiquinol-cytochrome c oxidoreductase (cytochrome b-c1 complex, complex III, CIII), resulting in different assemblies (supercomplex SCI(1)III(2)IV(1) and megacomplex MCI(2)III(2)IV(2)). Found in a complex with TMEM177, COA6, COX18, COX20, SCO1 and SCO2. Interacts with TMEM177 in a COX20-dependent manner. Interacts with COX20. Interacts with COX16. Cu cation is required as a cofactor.

Its subcellular location is the mitochondrion inner membrane. It carries out the reaction 4 Fe(II)-[cytochrome c] + O2 + 8 H(+)(in) = 4 Fe(III)-[cytochrome c] + 2 H2O + 4 H(+)(out). Its function is as follows. Component of the cytochrome c oxidase, the last enzyme in the mitochondrial electron transport chain which drives oxidative phosphorylation. The respiratory chain contains 3 multisubunit complexes succinate dehydrogenase (complex II, CII), ubiquinol-cytochrome c oxidoreductase (cytochrome b-c1 complex, complex III, CIII) and cytochrome c oxidase (complex IV, CIV), that cooperate to transfer electrons derived from NADH and succinate to molecular oxygen, creating an electrochemical gradient over the inner membrane that drives transmembrane transport and the ATP synthase. Cytochrome c oxidase is the component of the respiratory chain that catalyzes the reduction of oxygen to water. Electrons originating from reduced cytochrome c in the intermembrane space (IMS) are transferred via the dinuclear copper A center (CU(A)) of subunit 2 and heme A of subunit 1 to the active site in subunit 1, a binuclear center (BNC) formed by heme A3 and copper B (CU(B)). The BNC reduces molecular oxygen to 2 water molecules using 4 electrons from cytochrome c in the IMS and 4 protons from the mitochondrial matrix. The protein is Cytochrome c oxidase subunit 2 (MT-CO2) of Myxine glutinosa (Atlantic hagfish).